The following is a 966-amino-acid chain: Protein STICHEL-like 4 (966 aa).

Disordered stretches follow at residues 64–118 (RSLR…DRSS) and 200–237 (RDNAAGNESEMSIASNSVPRGEKYEGEEGGGGRDREQN). A compositionally biased stretch (basic and acidic residues) spans 75 to 84 (LKEDHQDSRE). Residues 98-108 (PIVSFGTSKVT) show a composition bias toward polar residues. Over residues 109 to 118 (PSDEKFDRSS) the composition is skewed to basic and acidic residues. Over residues 208 to 217 (SEMSIASNSV) the composition is skewed to polar residues. A compositionally biased stretch (basic and acidic residues) spans 219 to 236 (RGEKYEGEEGGGGRDREQ). 384 to 391 (GPNGTGKT) contacts ATP. Zn(2+) is bound by residues cysteine 403, cysteine 412, cysteine 415, and cysteine 418. Residues 650-678 (SKEDMEKLKQALKTLSESEKQLRVSNDKL) adopt a coiled-coil conformation. The span at 706-717 (FNHTPLTDSDPS) shows a compositional bias: polar residues. The disordered stretch occupies residues 706–733 (FNHTPLTDSDPSNHVVAGTRRDDSKQGF).

Belongs to the DnaX/STICHEL family.

The sequence is that of Protein STICHEL-like 4 from Arabidopsis thaliana (Mouse-ear cress).